Consider the following 105-residue polypeptide: U2-lycotoxin-Ls1c (105 aa).

A signal peptide spans M1–S17. Residues F18–R41 constitute a propeptide that is removed on maturation. Cystine bridges form between C51–C67, C58–C97, C60–C83, and C69–C81.

It belongs to the neurotoxin 04 (omega-agtx) family. 01 (type I omega-agtx) subfamily. As to expression, expressed by the venom gland.

The protein resides in the secreted. Insecticidal to house crickets. It induces an excitatory slow-onset impact that leads to irreversible spastic paralysis. It also modifies human voltage-gated potassium channel Kv1.5/KCNA5. Most likely, it binds to the voltage-sensing domain of the channel, suggesting it does not block the pore but prevents its opening at physiological membrane potentials. The recombinant peptide binds to the channel in an irreversible manner and slows down the hKv1.5 current activation kinetics. It is not toxic to mice, when intracranially injected (at 0.5 ug/g mouse). The polypeptide is U2-lycotoxin-Ls1c (Lycosa singoriensis (Wolf spider)).